A 1635-amino-acid polypeptide reads, in one-letter code: Cortactin-binding protein 2 (1635 aa).

4 disordered regions span residues 1–20, 193–219, 264–469, and 483–582; these read MATAGGSGQPLCSGPPARTS, ASKLDAEKRKTGELEGALSAERQKSSQ, EQLR…DNLV, and SRFT…PHGI. Positions 116–273 form a coiled coil; the sequence is RKMQERMSAQ…EQLRKGNDHK (158 aa). Basic and acidic residues-rich tracts occupy residues 193–205 and 264–274; these read ASKLDAEKRKTGE and EQLRKGNDHKP. Low complexity-rich tracts occupy residues 320–331 and 375–395; these read PPVAVPAKPSSA and GPSSGSTPEPTGSALMPLLNN. The span at 402–414 shows a compositional bias: polar residues; it reads SQNHSLTSSTPNL. Positions 439–453 are enriched in low complexity; it reads QGNANDQDQNGNTTQ. The segment covering 454–466 has biased composition (polar residues); the sequence is SPPSREVSPTSRD. The residue at position 484 (R484) is an Asymmetric dimethylarginine. ANK repeat units follow at residues 697–727, 731–760, 764–793, 797–826, 830–859, and 893–923; these read GRPTRLHQAAAQGNVTLLSVLLNEEGLDINH, DGSSALYSAAKNGHTDCVRLLLNANAQVDD, NGFTPLCSAAAQGHVKCAELLIAYHADINH, GGQTPLYLACKNGNNECIKLLLEAGTDRSI, DGWTPVHAAVDSGNVDSLTLLMYYGGPESE, and EGWTAAHIAASKGLKNCLEILCGHGRLEAER. The tract at residues 856 to 876 is disordered; sequence PESENSGSKDQTGLGSREESR. The segment covering 858–869 has biased composition (polar residues); it reads SENSGSKDQTGL. A disordered region spans residues 1420 to 1469; the sequence is SHRKKGESGSWRKVNTSPRKKSGLSSSQTWTKQEATKDGVRNDTGHQNGN. Positions 1432 to 1452 are enriched in polar residues; it reads KVNTSPRKKSGLSSSQTWTKQ. Over residues 1453–1463 the composition is skewed to basic and acidic residues; that stretch reads EATKDGVRNDT. The residue at position 1498 (S1498) is a Phosphoserine. Positions 1531–1624 are disordered; sequence RMFGSSRTDP…RQREINNNLK (94 aa). Composition is skewed to polar residues over residues 1546 to 1555 and 1563 to 1577; these read PTMSDRSLPS and LSSNPTLECSNNTPK. Basic and acidic residues predominate over residues 1615–1624; it reads RQREINNNLK.

As to quaternary structure, interacts with CTTN/cortactin SH3 domain. Interacts with STRN, STRN4/zinedin and MOB4/phocein; this interactions mediate the association with the STRIPAK core complex and may regulate dendritic spine distribution of the STRIPAK complex in hippocampal neurons. Activation of glutamate receptors weakens the interaction with STRN and STRN4.

Its subcellular location is the cytoplasm. The protein localises to the cell cortex. The protein resides in the cell projection. It localises to the dendritic spine. Functionally, regulates the dendritic spine distribution of CTTN/cortactin in hippocampal neurons, and thus controls dendritic spinogenesis and dendritic spine maintenance. Associates with the striatin-interacting phosphatase and kinase (STRIPAK) core complex to regulate dendritic spine distribution of the STRIPAK complex in hippocampal neurons. This is Cortactin-binding protein 2 (CTTNBP2) from Ornithorhynchus anatinus (Duckbill platypus).